A 449-amino-acid chain; its full sequence is Allantoinase (449 aa).

Residues H61, H63, K148, H184, H240, and D313 each coordinate Zn(2+). K148 carries the post-translational modification N6-carboxylysine.

This sequence belongs to the metallo-dependent hydrolases superfamily. Allantoinase family. As to quaternary structure, homotetramer. Zn(2+) serves as cofactor. In terms of processing, carboxylation allows a single lysine to coordinate two zinc ions.

It catalyses the reaction (S)-allantoin + H2O = allantoate + H(+). It participates in nitrogen metabolism; (S)-allantoin degradation; allantoate from (S)-allantoin: step 1/1. Catalyzes the conversion of allantoin (5-ureidohydantoin) to allantoic acid by hydrolytic cleavage of the five-member hydantoin ring. This Desulfitobacterium hafniense (strain DSM 10664 / DCB-2) protein is Allantoinase.